The sequence spans 381 residues: 40-kDa huntingtin-associated protein (381 aa).

A2 bears the N-acetylalanine mark. Residues 34-36 carry the Nuclear localization signal motif; that stretch reads KKR. The tract at residues 221-265 is disordered; sequence QLELLPQPPSGPQPPLSGPQPRPVLGSTLPLPQPPDHAPGSVAPS. Pro residues predominate over residues 226–242; it reads PQPPSGPQPPLSGPQPR.

As to quaternary structure, interacts with HTT (via C-terminus). Interacts with RAB5A. Found in a complex with F8A1/F8A2/F8A3, HTT and RAB5A; mediates the recruitment of HTT by RAB5A onto early endosomes. As to expression, produced abundantly in a wide variety of cell types.

The protein resides in the cytoplasm. Its subcellular location is the nucleus. It localises to the early endosome. The protein localises to the nuclear body. RAB5A effector molecule that is involved in vesicular trafficking of early endosomes. Mediates the recruitment of HTT by RAB5A onto early endosomes. The HTT-F8A1/F8A2/F8A3-RAB5A complex stimulates early endosomal interaction with actin filaments and inhibits interaction with microtubules, leading to the reduction of endosome motility. The protein is 40-kDa huntingtin-associated protein (F8a1) of Mus musculus (Mouse).